Consider the following 99-residue polypeptide: UPF0235 protein HS_1657 (99 aa).

This sequence belongs to the UPF0235 family.

The protein is UPF0235 protein HS_1657 of Histophilus somni (strain 129Pt) (Haemophilus somnus).